The primary structure comprises 109 residues: Protein ripply2 (109 aa).

Residues 1 to 15 (MENITFTSGLNSEMD) show a composition bias toward polar residues. 2 disordered regions span residues 1–42 (MENI…RPAD) and 88–109 (YEDP…KELR). A WRPW motif motif is present at residues 20-23 (WRPW). Basic and acidic residues predominate over residues 30–42 (KAPDYKPYKRPAD). Residues 53–88 (HPVKLFWPKSQCFDYLYEDAEVLLRNYPVQATICLY) form a ripply homology domain region. Over residues 89-109 (EDPDTEDEEDYSDEEDEKELR) the composition is skewed to acidic residues.

It belongs to the ripply family. As to expression, first expressed in the paraxial mesoderm at the 90% epiboly stage, and subsequently confined to the presomitic mesoderm. Expressed in the rostral compartment of S-I and S-II.

The protein localises to the nucleus. Functionally, plays a role in somitogenesis. Required for somite segregation and establishment of rostrocaudal polarity in somites. This chain is Protein ripply2, found in Danio rerio (Zebrafish).